The primary structure comprises 222 residues: Large ribosomal subunit protein uL4 (222 aa).

It belongs to the universal ribosomal protein uL4 family. As to quaternary structure, part of the 50S ribosomal subunit.

In terms of biological role, one of the primary rRNA binding proteins, this protein initially binds near the 5'-end of the 23S rRNA. It is important during the early stages of 50S assembly. It makes multiple contacts with different domains of the 23S rRNA in the assembled 50S subunit and ribosome. Its function is as follows. Forms part of the polypeptide exit tunnel. This chain is Large ribosomal subunit protein uL4, found in Chlamydia trachomatis serovar L2 (strain ATCC VR-902B / DSM 19102 / 434/Bu).